A 730-amino-acid polypeptide reads, in one-letter code: Multifunctional procollagen lysine hydroxylase and glycosyltransferase (730 aa).

Residues 1-16 form the signal peptide; sequence MRVLPFLLPLIPVLLA. Residues 20 to 280 are required for glycosyltransferase activity; sequence TDLPELVVVT…CGLEVKESEE (261 aa). Residues 30–32 and 98–100 each bind UDP; these read VAT and DAY. Residues D98, D101, and H242 each contribute to the Mn(2+) site. 245-248 serves as a coordination point for UDP; sequence GPSK. A disulfide bond links C268 and C271. The accessory region stretch occupies residues 281-507; the sequence is VPLIALNLFI…YYGFLIVSDE (227 aa). C554 and C690 form a disulfide bridge. The 2-oxoglutarate site is built by R590 and Y648. One can recognise a Fe2OG dioxygenase domain in the interval 639-730; it reads ESNMMFVVRY…RYIMVSFINP (92 aa). H659 and D661 together coordinate Fe cation. Positions 664 to 707 are important for dimerization; that stretch reads TFSIDIALNKKGRDYEGGGVRYIRYNCTVPADEVGYAMMFPGRL. N689 carries an N-linked (GlcNAc...) asparagine glycan. H711 is a binding site for Fe cation. R721 lines the 2-oxoglutarate pocket.

Homodimer. It depends on Fe(2+) as a cofactor. Requires L-ascorbate as cofactor. Mn(2+) serves as cofactor.

It is found in the rough endoplasmic reticulum. Its subcellular location is the endoplasmic reticulum lumen. The protein localises to the endoplasmic reticulum membrane. The protein resides in the secreted. It localises to the extracellular space. The catalysed reaction is L-lysyl-[collagen] + 2-oxoglutarate + O2 = (5R)-5-hydroxy-L-lysyl-[collagen] + succinate + CO2. It carries out the reaction (5R)-5-hydroxy-L-lysyl-[collagen] + UDP-alpha-D-galactose = (5R)-5-O-(beta-D-galactosyl)-5-hydroxy-L-lysyl-[collagen] + UDP + H(+). The enzyme catalyses (5R)-5-O-(beta-D-galactosyl)-5-hydroxy-L-lysyl-[collagen] + UDP-alpha-D-glucose = (5R)-5-O-[alpha-D-glucosyl-(1-&gt;2)-beta-D-galactosyl]-5-hydroxy-L-lysyl-[collagen] + UDP + H(+). Its function is as follows. Multifunctional enzyme that catalyzes a series of post-translational modifications on Lys residues in procollagen. Catalyzes the formation of hydroxylysine residues in -Xaa-Lys-Gly- sequences in type IV collagens. Transfers galactose onto hydroxylysine groups, giving rise to galactosyl 5-hydroxylysine. Catalyzes the subsequent transfer of glucose moieties, giving rise to 1,2-glucosylgalactosyl-5-hydroxylysine residues. Essential for normal biosynthesis and secretion of type IV collagens. Essential for normal stability of the basement membrane. This chain is Multifunctional procollagen lysine hydroxylase and glycosyltransferase (let-268), found in Caenorhabditis elegans.